The chain runs to 669 residues: MEKPKQKLTQVTVNFFLKTSQMILQARSLDEHGKGKLNKWFNLHTFNSDDLRSELRLWRSTIDLTAVPPMIVETYLDLGNLPQGHTLALKDEHGNLWPVTKGGSKKTEVVLERWLVEFDPNEFGTIEELPYIYKQAIILCRSIYTIIRIMPAASLRNQSPHYVLANKIVDGSKPISSKGRIGLSKTIIPHQMLTDTHVRHRTFSPIETSLGTLKVSVAYRSHCEFTELAEWDHRELGREKEPREDLRQVESKGEEDHSIESIPYEEKAYKTDEEKSDKTPEHVQYKPFKPEFKQLEAVKLEGSDFKSELHEGTSPLSLSGSPSSPPRDDKKRPSIQPFRVGSIGNSPPPASSSLERRISITSNKSTSNASLAAVLRNPRSSFSIPIAGSIGTGAPVTGGFPRSVSSSHGYGYEDSDSAANTPRFSSSFGSRASRRFSNTSVRHGSLHDTTSPLGTSAGSATSIPLSGLYIDDDISDFVRMIDSKQDLRFGHDSGGSGSQSGSQYEVLNRFHQLKSQHQQLGDSVNASVMMHRKSSSPPGSYESHVPSIHSRLRESSEPHPAPATAPAPGPLIKPASKMMSSPVISTTSAHAMSQTASATTRDEIVGLATTPSTYRKHLHYENVFDDDDEDEDHHGYFKAKARSKSLSRSHFDDDDDLLFTMSDTNLAKH.

Disordered regions lie at residues 239 to 288, 305 to 354, 406 to 458, and 530 to 581; these read EKEP…YKPF, FKSE…SSSL, SSHG…TSAG, and MHRK…MMSS. The segment covering 423-437 has biased composition (low complexity); that stretch reads RFSSSFGSRASRRFS. The span at 438–458 shows a compositional bias: polar residues; it reads NTSVRHGSLHDTTSPLGTSAG. Over residues 559–571 the composition is skewed to pro residues; that stretch reads HPAPATAPAPGPL.

It belongs to the ATG13 family. Fungi subfamily. As to quaternary structure, interacts with ATG1 to form the ATG1-ATG13 kinase complex.

It is found in the cytoplasm. The protein resides in the preautophagosomal structure. Its function is as follows. Activates the ATG1 kinase in a nutritional condition dependent manner through the TOR pathway, leading to autophagy. Also involved in cytoplasm to vacuole transport (Cvt) and more specifically in Cvt vesicle formation. Seems to play a role in the switching machinery regulating the conversion between the Cvt pathway and autophagy. Finally, ATG13 is also required for glycogen storage during stationary phase. The sequence is that of Autophagy-related protein 13 (ATG13) from Meyerozyma guilliermondii (strain ATCC 6260 / CBS 566 / DSM 6381 / JCM 1539 / NBRC 10279 / NRRL Y-324) (Yeast).